The sequence spans 578 residues: MAEESRKPSAPSPPDQTPEEDLVIVKVEEDHGWDQESSLHESNPLGQEVFRLRFRQLRYQETLGPREALIQLRALCHQWLRPDLNTKEQILELLVLEQFLTILPEELQTLVKEHQLENGEEVVTLLEDLERQIDILGRPVSARVHGHRVLWEEVVHSASAPEPPNTQLQSEATQHKSPVPQESQERAMSTSQSPTRSQKGSSGDQEMTATLLTAGFQTLEKIEDMAVSLIREEWLLDPSQKDLCRDNRPENFRNMFSLGGETRSENRELASKQVISTGIQPHGETAAKCNGDVIRGLEHEEARDLLGRLERQRGNPTQERRHKCDECGKSFAQSSGLVRHWRIHTGEKPYQCNVCGKAFSYRSALLSHQDIHNKVKRYHCKECGKAFSQNTGLILHQRIHTGEKPYQCNQCGKAFSQSAGLILHQRIHSGERPYECNECGKAFSHSSHLIGHQRIHTGEKPYECDECGKTFRRSSHLIGHQRSHTGEKPYKCNECGRAFSQKSGLIEHQRIHTGERPYKCKECGKAFNGNTGLIQHLRIHTGEKPYQCNECGKAFIQRSSLIRHQRIHSGEKSESISV.

Residues 1 to 20 form a disordered region; that stretch reads MAEESRKPSAPSPPDQTPEE. Ser12 is modified (phosphoserine). Lys26 is covalently cross-linked (Glycyl lysine isopeptide (Lys-Gly) (interchain with G-Cter in SUMO2)). The region spanning 51 to 133 is the SCAN box domain; sequence RLRFRQLRYQ…TLLEDLERQI (83 aa). The tract at residues 158–205 is disordered; that stretch reads ASAPEPPNTQLQSEATQHKSPVPQESQERAMSTSQSPTRSQKGSSGDQ. Residues 165 to 205 are compositionally biased toward polar residues; it reads NTQLQSEATQHKSPVPQESQERAMSTSQSPTRSQKGSSGDQ. Residues Lys176 and Lys199 each participate in a glycyl lysine isopeptide (Lys-Gly) (interchain with G-Cter in SUMO2) cross-link. Ser201 carries the phosphoserine modification. Residues 220–316 form the KRAB domain; that stretch reads EKIEDMAVSL…GRLERQRGNP (97 aa). Residues Lys221, Lys272, and Lys288 each participate in a glycyl lysine isopeptide (Lys-Gly) (interchain with G-Cter in SUMO2) cross-link. 2 consecutive C2H2-type zinc fingers follow at residues 322–344 and 350–372; these read HKCD…WRIH and YQCN…QDIH. Glycyl lysine isopeptide (Lys-Gly) (interchain with G-Cter in SUMO2) cross-links involve residues Lys374 and Lys376. C2H2-type zinc fingers lie at residues 378–400, 406–428, 434–456, 462–484, 490–512, 518–540, and 546–568; these read YHCK…QRIH, YQCN…QRIH, YECN…QRIH, YECD…QRSH, YKCN…QRIH, and YKCK…LRIH. Residues Lys413 and Lys441 each participate in a glycyl lysine isopeptide (Lys-Gly) (interchain with G-Cter in SUMO2) cross-link. Lys502 is covalently cross-linked (Glycyl lysine isopeptide (Lys-Gly) (interchain with G-Cter in SUMO2)). A Glycyl lysine isopeptide (Lys-Gly) (interchain with G-Cter in SUMO2) cross-link involves residue Lys572.

This sequence belongs to the krueppel C2H2-type zinc-finger protein family.

The protein localises to the nucleus. May be involved in transcriptional regulation. This is Zinc finger protein with KRAB and SCAN domains 8 (ZKSCAN8) from Homo sapiens (Human).